Consider the following 372-residue polypeptide: Pepsin A (372 aa).

Residues 1–42 constitute a propeptide, activation peptide; that stretch reads MSVVKIPLVKKKSLRQNLIENGKLKEFMRTHKYNLGSKYIRE. Residues 60 to 369 enclose the Peptidase A1 domain; the sequence is YFGTIGIGTP…DRGNNQIGLA (310 aa). Asp78 is a catalytic residue. Cys91 and Cys96 are oxidised to a cystine. Phosphoserine is present on Ser114. An intrachain disulfide couples Cys252 to Cys256. Residue Asp261 is part of the active site. Cys295 and Cys328 are joined by a disulfide.

This sequence belongs to the peptidase A1 family.

It localises to the secreted. The catalysed reaction is Preferential cleavage: hydrophobic, preferably aromatic, residues in P1 and P1' positions. Cleaves 1-Phe-|-Val-2, 4-Gln-|-His-5, 13-Glu-|-Ala-14, 14-Ala-|-Leu-15, 15-Leu-|-Tyr-16, 16-Tyr-|-Leu-17, 23-Gly-|-Phe-24, 24-Phe-|-Phe-25 and 25-Phe-|-Tyr-26 bonds in the B chain of insulin.. Shows particularly broad specificity; although bonds involving phenylalanine and leucine are preferred, many others are also cleaved to some extent. The protein is Pepsin A (PGA) of Bos taurus (Bovine).